A 373-amino-acid chain; its full sequence is RNA cytidine acetyltransferase (373 aa).

Residue arginine 53 coordinates ATP. Acetyl-CoA contacts are provided by residues 216-218 and 223-229; these read IAT and TGMGYGS. The segment at 246–271 is disordered; it reads GEFEEENEAAKPADEESDDESNLLKE. Position 313 (arginine 313) interacts with acetyl-CoA.

The protein belongs to the RNA cytidine acetyltransferase family. NAT10 subfamily.

The protein resides in the nucleus. The protein localises to the nucleolus. It carries out the reaction a cytidine in 18S rRNA + acetyl-CoA + ATP + H2O = an N(4)-acetylcytidine in 18S rRNA + ADP + phosphate + CoA + H(+). The catalysed reaction is a cytidine in tRNA + acetyl-CoA + ATP + H2O = an N(4)-acetylcytidine in tRNA + ADP + phosphate + CoA + H(+). Functionally, RNA cytidine acetyltransferase with specificity toward both 18S rRNA and tRNAs. Catalyzes the formation of N(4)-acetylcytidine (ac4C) in 18S rRNA. Required for early nucleolar cleavages of precursor rRNA at sites A0, A1 and A2 during 18S rRNA synthesis. Catalyzes the formation of ac4C in serine and leucine tRNAs. Requires a tRNA-binding adapter protein for full tRNA acetyltransferase activity but not for 18S rRNA acetylation. This is RNA cytidine acetyltransferase from Achlya ambisexualis (Water mold).